Reading from the N-terminus, the 398-residue chain is Dual-specificity RNA methyltransferase RlmN (398 aa).

Catalysis depends on glutamate 119, which acts as the Proton acceptor. One can recognise a Radical SAM core domain in the interval 125-364 (EADRATLCVS…TIVRKTRGDD (240 aa)). A disulfide bridge links cysteine 132 with cysteine 369. [4Fe-4S] cluster-binding residues include cysteine 139, cysteine 143, and cysteine 146. S-adenosyl-L-methionine is bound by residues 193–194 (GE), serine 225, 247–249 (SLH), and asparagine 326. The active-site S-methylcysteine intermediate is the cysteine 369.

It belongs to the radical SAM superfamily. RlmN family. Requires [4Fe-4S] cluster as cofactor.

The protein localises to the cytoplasm. The catalysed reaction is adenosine(2503) in 23S rRNA + 2 reduced [2Fe-2S]-[ferredoxin] + 2 S-adenosyl-L-methionine = 2-methyladenosine(2503) in 23S rRNA + 5'-deoxyadenosine + L-methionine + 2 oxidized [2Fe-2S]-[ferredoxin] + S-adenosyl-L-homocysteine. It catalyses the reaction adenosine(37) in tRNA + 2 reduced [2Fe-2S]-[ferredoxin] + 2 S-adenosyl-L-methionine = 2-methyladenosine(37) in tRNA + 5'-deoxyadenosine + L-methionine + 2 oxidized [2Fe-2S]-[ferredoxin] + S-adenosyl-L-homocysteine. In terms of biological role, specifically methylates position 2 of adenine 2503 in 23S rRNA and position 2 of adenine 37 in tRNAs. m2A2503 modification seems to play a crucial role in the proofreading step occurring at the peptidyl transferase center and thus would serve to optimize ribosomal fidelity. This chain is Dual-specificity RNA methyltransferase RlmN, found in Yersinia pseudotuberculosis serotype IB (strain PB1/+).